The chain runs to 168 residues: MKKFFAIAVLAGSVVTTAHSSLLNLKSMVEAITHRNSILSFVGYGCYCGLGGRGHPMDEVDWCCHAHDCCYEKLFEQGCRPYVDHYDHRIENGTMIVCTELNETECDKQTCECDKSLTLCLKDHPYRNKYRGYFNVYCQGPTPNCSIYDPYPEEVTCGHGLPATPVST.

Positions 1 to 20 are cleaved as a signal peptide; the sequence is MKKFFAIAVLAGSVVTTAHS. Intrachain disulfides connect cysteine 46–cysteine 138, cysteine 48–cysteine 64, cysteine 63–cysteine 120, cysteine 69–cysteine 145, cysteine 70–cysteine 113, cysteine 79–cysteine 106, and cysteine 98–cysteine 111. Ca(2+) is bound by residues tyrosine 47, glycine 49, and glycine 51. Residue histidine 67 is part of the active site. Position 68 (aspartate 68) interacts with Ca(2+). N-linked (GlcNAc...) asparagine glycans are attached at residues asparagine 92 and asparagine 102. Aspartate 114 is a catalytic residue. Positions 139–168 are required for localization on the plasma membrane; sequence QGPTPNCSIYDPYPEEVTCGHGLPATPVST. N-linked (GlcNAc...) asparagine glycosylation is present at asparagine 144.

This sequence belongs to the phospholipase A2 family. Ca(2+) is required as a cofactor. Strongly expressed in testis.

It localises to the secreted. Its subcellular location is the cell membrane. It carries out the reaction a 1,2-diacyl-sn-glycero-3-phosphocholine + H2O = a 1-acyl-sn-glycero-3-phosphocholine + a fatty acid + H(+). The catalysed reaction is 1-hexadecanoyl-2-(9Z-octadecenoyl)-sn-glycero-3-phospho-(1'-sn-glycerol) + H2O = 1-hexadecanoyl-sn-glycero-3-phospho-(1'-sn-glycerol) + (9Z)-octadecenoate + H(+). The enzyme catalyses 1-hexadecanoyl-2-(9Z,12Z-octadecadienoyl)-sn-glycero-3-phosphoethanolamine + H2O = 1-hexadecanoyl-sn-glycero-3-phosphoethanolamine + (9Z,12Z)-octadecadienoate + H(+). It catalyses the reaction 1-hexadecanoyl-2-(5Z,8Z,11Z,14Z-eicosatetraenoyl)-sn-glycero-3-phosphoethanolamine + H2O = 1-hexadecanoyl-sn-glycero-3-phosphoethanolamine + (5Z,8Z,11Z,14Z)-eicosatetraenoate + H(+). It carries out the reaction 1-hexadecanoyl-2-(9Z-octadecenoyl)-sn-glycero-3-phosphocholine + H2O = 1-hexadecanoyl-sn-glycero-3-phosphocholine + (9Z)-octadecenoate + H(+). The catalysed reaction is 1-hexadecanoyl-2-(9Z-octadecenoyl)-sn-glycero-3-phospho-L-serine + H2O = 1-hexadecanoyl-sn-glycero-3-phospho-L-serine + (9Z)-octadecenoate + H(+). Its function is as follows. Secretory calcium-dependent phospholipase A2 that primarily targets extracellular phospholipids. Hydrolyzes the ester bond of the fatty acyl group attached at the sn-2 position of phospholipids (phospholipase A2 activity), the catalytic efficiency decreasing in the following order: phosphatidylglycerols &gt; phosphatidylethanolamines &gt; phosphatidylcholines &gt; phosphatidylserines. May play a role in lipid mediator production in inflammatory conditions, by providing arachidonic acid to downstream cyclooxygenases and lipoxygenases. The polypeptide is Group IIF secretory phospholipase A2 (Pla2g2f) (Mus musculus (Mouse)).